The following is a 374-amino-acid chain: Nuclear hormone receptor family member nhr-57 (374 aa).

The segment at residues 7–84 (RKYCSVCHQL…VGMNPEVVQA (78 aa)) is a DNA-binding region (nuclear receptor). NR C4-type zinc fingers lie at residues 10-30 (CSVC…CKAC) and 48-67 (CRKK…CKSC). The NR LBD domain occupies 124-374 (QMTPTLCGVM…DKIYKIIDGQ (251 aa)).

This sequence belongs to the nuclear hormone receptor family.

It localises to the nucleus. Functionally, orphan nuclear receptor. The protein is Nuclear hormone receptor family member nhr-57 (nhr-57) of Caenorhabditis elegans.